The sequence spans 914 residues: Translation initiation factor IF-2 (914 aa).

The tract at residues 58–160 is disordered; that stretch reads KTEKKQTAKK…EAEPKIEVMP (103 aa). The segment covering 70 to 91 has biased composition (basic and acidic residues); the sequence is KKDTVKKDTVKKTAVKKDDSKA. Residues 92–103 show a composition bias toward basic residues; that stretch reads AKKTKPIAKKSA. A compositionally biased stretch (basic and acidic residues) spans 104-160; it reads PKTEKKVEKKVESKISKPDNEILEAKPEISKPEIKAEPKKEEIEQKQEAEPKIEVMP. A tr-type G domain is found at 413–582; the sequence is ERVPVITIMG…LLQADLLELK (170 aa). The G1 stretch occupies residues 422–429; it reads GHVDHGKT. 422–429 contacts GTP; sequence GHVDHGKT. Positions 447–451 are G2; the sequence is GITQH. The segment at 468–471 is G3; that stretch reads DTPG. Residues 468–472 and 522–525 each bind GTP; these read DTPGH and NKMD. Positions 522–525 are G4; the sequence is NKMD. Positions 558-560 are G5; it reads SAK.

It belongs to the TRAFAC class translation factor GTPase superfamily. Classic translation factor GTPase family. IF-2 subfamily.

The protein localises to the cytoplasm. In terms of biological role, one of the essential components for the initiation of protein synthesis. Protects formylmethionyl-tRNA from spontaneous hydrolysis and promotes its binding to the 30S ribosomal subunits. Also involved in the hydrolysis of GTP during the formation of the 70S ribosomal complex. This chain is Translation initiation factor IF-2, found in Campylobacter hominis (strain ATCC BAA-381 / DSM 21671 / CCUG 45161 / LMG 19568 / NCTC 13146 / CH001A).